A 121-amino-acid chain; its full sequence is Flagellar protein FliT (121 aa).

The required for homodimerization stretch occupies residues 1-50 (MNNAPHLYFAWQQLVEKSQLMLRLATEEQWDELIASEMAYVNAVQEIAHL). The tract at residues 60-98 (MQEQLRPMLRLILDNESKVKQLLQIRMDELAKLVGQSSV) is fliD binding.

This sequence belongs to the FliT family. In terms of assembly, homodimer. Interacts with FliD and FlhC.

The protein localises to the cytoplasm. It localises to the cytosol. In terms of biological role, dual-function protein that regulates the transcription of class 2 flagellar operons and that also acts as an export chaperone for the filament-capping protein FliD. As a transcriptional regulator, acts as an anti-FlhDC factor; it directly binds FlhC, thus inhibiting the binding of the FlhC/FlhD complex to class 2 promoters, resulting in decreased expression of class 2 flagellar operons. As a chaperone, effects FliD transition to the membrane by preventing its premature polymerization, and by directing it to the export apparatus. The chain is Flagellar protein FliT from Escherichia coli O9:H4 (strain HS).